The following is a 198-amino-acid chain: Recombination protein RecR (198 aa).

A C4-type zinc finger spans residues 57 to 72; that stretch reads CSVCGHITDQDPCYIC. Positions 80-175 constitute a Toprim domain; that stretch reads SVICVVQDPK…KLSRIAHGLP (96 aa).

The protein belongs to the RecR family.

In terms of biological role, may play a role in DNA repair. It seems to be involved in an RecBC-independent recombinational process of DNA repair. It may act with RecF and RecO. In Bacillus subtilis (strain 168), this protein is Recombination protein RecR.